Consider the following 432-residue polypeptide: N-acylneuraminate cytidylyltransferase (432 aa).

Methionine 1 is subject to N-acetylmethionine. A disordered region spans residues methionine 1–glutamate 38. The BC1 motif signature appears at proline 15 to arginine 31. Basic residues predominate over residues arginine 18–arginine 29. Omega-N-methylarginine occurs at positions 35 and 50. Substrate-binding residues include arginine 50, asparagine 60, arginine 109, serine 118, serine 120, and glutamine 141. The short motif at lysine 198–aspartate 204 is the BC2 motif element. The active site involves arginine 199. Positions lysine 267–lysine 274 match the BC3 motif motif.

This sequence belongs to the CMP-NeuNAc synthase family. In terms of assembly, homotetramer; the active enzyme is formed by a dimer of dimers. Highly expressed in brain and heart, and at intermediate level muscle and liver.

Its subcellular location is the nucleus. The enzyme catalyses an N-acylneuraminate + CTP = a CMP-N-acyl-beta-neuraminate + diphosphate. The protein operates within amino-sugar metabolism; N-acetylneuraminate metabolism. Functionally, catalyzes the activation of N-acetylneuraminic acid (NeuNAc) to cytidine 5'-monophosphate N-acetylneuraminic acid (CMP-NeuNAc), a substrate required for the addition of sialic acid. Has some activity toward NeuNAc, N-glycolylneuraminic acid (Neu5Gc) or 2-keto-3-deoxy-D-glycero-D-galacto-nononic acid (KDN). In Mus musculus (Mouse), this protein is N-acylneuraminate cytidylyltransferase (Cmas).